Reading from the N-terminus, the 117-residue chain is Large ribosomal subunit protein uL18 (117 aa).

The protein belongs to the universal ribosomal protein uL18 family. In terms of assembly, part of the 50S ribosomal subunit; part of the 5S rRNA/L5/L18/L25 subcomplex. Contacts the 5S and 23S rRNAs.

This is one of the proteins that bind and probably mediate the attachment of the 5S RNA into the large ribosomal subunit, where it forms part of the central protuberance. This Glaesserella parasuis serovar 5 (strain SH0165) (Haemophilus parasuis) protein is Large ribosomal subunit protein uL18.